A 134-amino-acid chain; its full sequence is MTFVVAAVVLLTVVPLATPLKCVQCDGPLTEFDCKTTVPEAKDCPQLNTHCFRNDTFNSKNELIMVRRGCTNEKEPSPPCQEVGNGGRRCTYTCNSDGCNNAPGFAIAIEPSRMVIFIVTFSVMISFILHTSAN.

The first 19 residues, 1 to 19 (MTFVVAAVVLLTVVPLATP), serve as a signal peptide directing secretion.

The protein belongs to the scoloptoxin-05 family. In terms of processing, contains 5 disulfide bonds. In terms of tissue distribution, expressed by the venom gland.

It localises to the secreted. The protein is U-scoloptoxin(05)-Er2a of Ethmostigmus rubripes (Giant centipede).